A 790-amino-acid polypeptide reads, in one-letter code: Lysine biosynthesis regulatory protein LYS14 (790 aa).

2 disordered regions span residues 1-50 and 72-157; these read MFES…SCFE and FNHK…YSRN. Positions 35–47 are enriched in low complexity; it reads SGSSFTNSGTSTS. Composition is skewed to polar residues over residues 75 to 113 and 120 to 142; these read KQMT…SEQD and TISQ…TSTV. A DNA-binding region (zn(2)-C6 fungal-type) is located at residues 159–186; the sequence is CSECKRRRMKCDETKPTCWQCARLNRQC. The segment at 195-258 is disordered; sequence KKRRTSNAQR…PKPITDNGKN (64 aa). The segment covering 222 to 239 has biased composition (basic residues); the sequence is ARKRQHSSCKAEKKKKVR.

It localises to the nucleus. Functionally, activates the transcription of lysine biosynthesis genes. This activation is dependent on the inducer alpha-aminoadipate semialdehyde and repressed by lysine. This Saccharomyces cerevisiae (strain ATCC 204508 / S288c) (Baker's yeast) protein is Lysine biosynthesis regulatory protein LYS14 (LYS14).